Reading from the N-terminus, the 730-residue chain is Elongation factor 2 (730 aa).

Positions 19 to 260 (DRIRNIGIVA…MVVKHLPNPL (242 aa)) constitute a tr-type G domain. Residues 28 to 35 (AHIDHGKT), 94 to 98 (DTPGH), and 148 to 151 (NKVD) each bind GTP. H597 is modified (diphthamide).

The protein belongs to the TRAFAC class translation factor GTPase superfamily. Classic translation factor GTPase family. EF-G/EF-2 subfamily.

The protein resides in the cytoplasm. Functionally, catalyzes the GTP-dependent ribosomal translocation step during translation elongation. During this step, the ribosome changes from the pre-translocational (PRE) to the post-translocational (POST) state as the newly formed A-site-bound peptidyl-tRNA and P-site-bound deacylated tRNA move to the P and E sites, respectively. Catalyzes the coordinated movement of the two tRNA molecules, the mRNA and conformational changes in the ribosome. In Methanoculleus marisnigri (strain ATCC 35101 / DSM 1498 / JR1), this protein is Elongation factor 2.